A 248-amino-acid polypeptide reads, in one-letter code: MTRILILGGTGEARALAAALADVPGVEAVSSLAGRVRDPRLPVGDVRIGGFGGADGLAECVRAHPVDAIVDATHPFAAQITRNAADAAHRRGIPLVVLRRPEWSPRPGEHWHGAADLADAAELLPDLGTRIFLTIGRQGVDAFADLQALWFLIRAIDPPDVAMPPHSTLLLARGPFAVADETALMREHRIDVLVTKNSGGGQTDAKLDAARALGIPVLMIRRPPLPPATETVDDVAGAIAWVGTLTRR.

It belongs to the precorrin-6x reductase family.

It catalyses the reaction precorrin-6B + NADP(+) = precorrin-6A + NADPH + 2 H(+). It functions in the pathway cofactor biosynthesis; adenosylcobalamin biosynthesis; cob(II)yrinate a,c-diamide from precorrin-2 (aerobic route): step 6/10. Its function is as follows. Catalyzes the reduction of the macrocycle of precorrin-6X into precorrin-6Y. This is Precorrin-6A reductase (cobK) from Rhodococcus erythropolis (Arthrobacter picolinophilus).